A 116-amino-acid polypeptide reads, in one-letter code: M-zodatoxin-Lt6a/b (116 aa).

The first 22 residues, 1-22, serve as a signal peptide directing secretion; the sequence is MKYFVVALTLAVAFVCIEECKT. 2 propeptides span residues 23-44 and 80-83; these read VEIGYAVSEDFDQNEIDNEEAR and EEAR. Short sequence motifs (processing quadruplet motif) lie at residues 41–44 and 80–83; these read EEAR. Position 84 is a pyrrolidone carboxylic acid (Q84).

The protein belongs to the cationic peptide 03 (latarcin) family. 06 subfamily. In terms of processing, cleavage of the propeptide depends on the processing quadruplet motif (XXXR, with at least one of X being E). In terms of tissue distribution, expressed by the venom gland.

It localises to the secreted. Its function is as follows. Does not have antimicrobial activity against neither Gram-positive bacteria (A.globiformis VKM Ac-1112 (MIC&gt;70 uM), and B.subtilis VKM B-501 (MIC&gt;70 uM)), nor Gram-negative bacteria (E.coli DH5-alpha (MIC&gt;70 uM), E.coli MH1 (MIC&gt;70 uM), and P.aeruginosa PAO1 (MIC&gt;70 uM)), nor yeasts (P.pastoris GS115 (MIC&gt;70 uM), and S.cerevisiae Y190 (MIC&gt;70 uM)). Does not have hemolytic activity against rabbit erythrocytes. However, it causes some conductance changes in planar bilayer membranes, without membrane rupture, suggesting a cytolytic function on other biological targets. It causes paralysis, but is not lethal when injected into insect (M.domestica) larvae. This is M-zodatoxin-Lt6a/b from Lachesana tarabaevi (Spider).